The sequence spans 140 residues: Nucleoside diphosphate kinase (140 aa).

The ATP site is built by Lys11, Phe59, Arg87, Thr93, Arg104, and Asn114. The active-site Pros-phosphohistidine intermediate is the His117.

This sequence belongs to the NDK family. In terms of assembly, homotetramer. Mg(2+) is required as a cofactor.

The protein localises to the cytoplasm. The enzyme catalyses a 2'-deoxyribonucleoside 5'-diphosphate + ATP = a 2'-deoxyribonucleoside 5'-triphosphate + ADP. The catalysed reaction is a ribonucleoside 5'-diphosphate + ATP = a ribonucleoside 5'-triphosphate + ADP. Major role in the synthesis of nucleoside triphosphates other than ATP. The ATP gamma phosphate is transferred to the NDP beta phosphate via a ping-pong mechanism, using a phosphorylated active-site intermediate. This is Nucleoside diphosphate kinase from Rickettsia peacockii (strain Rustic).